The following is a 463-amino-acid chain: Kynureninase 2 (463 aa).

Residues L134, T135, 162–165 (FPSD), D247, H250, and Y272 contribute to the pyridoxal 5'-phosphate site. Position 273 is an N6-(pyridoxal phosphate)lysine (K273). 2 residues coordinate pyridoxal 5'-phosphate: W312 and N340.

The protein belongs to the kynureninase family. Homodimer. Requires pyridoxal 5'-phosphate as cofactor.

It is found in the cytoplasm. It carries out the reaction L-kynurenine + H2O = anthranilate + L-alanine + H(+). It catalyses the reaction 3-hydroxy-L-kynurenine + H2O = 3-hydroxyanthranilate + L-alanine + H(+). It participates in amino-acid degradation; L-kynurenine degradation; L-alanine and anthranilate from L-kynurenine: step 1/1. The protein operates within cofactor biosynthesis; NAD(+) biosynthesis; quinolinate from L-kynurenine: step 2/3. Catalyzes the cleavage of L-kynurenine (L-Kyn) and L-3-hydroxykynurenine (L-3OHKyn) into anthranilic acid (AA) and 3-hydroxyanthranilic acid (3-OHAA), respectively. In Aspergillus terreus (strain NIH 2624 / FGSC A1156), this protein is Kynureninase 2 (bna5-2).